The primary structure comprises 100 residues: Integration host factor subunit alpha (100 aa).

This sequence belongs to the bacterial histone-like protein family. Heterodimer of an alpha and a beta chain.

Its function is as follows. This protein is one of the two subunits of integration host factor, a specific DNA-binding protein that functions in genetic recombination as well as in transcriptional and translational control. In Jannaschia sp. (strain CCS1), this protein is Integration host factor subunit alpha.